The sequence spans 333 residues: Adenosine deaminase (333 aa).

His-12 and His-14 together coordinate Zn(2+). The substrate site is built by His-14, Asp-16, and Gly-170. Position 197 (His-197) interacts with Zn(2+). The Proton donor role is filled by Glu-200. Asp-278 contacts Zn(2+). Asp-279 serves as a coordination point for substrate.

This sequence belongs to the metallo-dependent hydrolases superfamily. Adenosine and AMP deaminases family. Adenosine deaminase subfamily. It depends on Zn(2+) as a cofactor.

The enzyme catalyses adenosine + H2O + H(+) = inosine + NH4(+). It carries out the reaction 2'-deoxyadenosine + H2O + H(+) = 2'-deoxyinosine + NH4(+). In terms of biological role, catalyzes the hydrolytic deamination of adenosine and 2-deoxyadenosine. In Klebsiella pneumoniae (strain 342), this protein is Adenosine deaminase.